We begin with the raw amino-acid sequence, 264 residues long: Thymidylate synthase (264 aa).

DUMP contacts are provided by residues arginine 21 and 126-127 (RR). Cysteine 146 acts as the Nucleophile in catalysis. DUMP is bound by residues 166-169 (RSAD), asparagine 177, and 207-209 (HLY). Aspartate 169 provides a ligand contact to (6R)-5,10-methylene-5,6,7,8-tetrahydrofolate. Alanine 263 contacts (6R)-5,10-methylene-5,6,7,8-tetrahydrofolate.

Belongs to the thymidylate synthase family. Bacterial-type ThyA subfamily. Homodimer.

Its subcellular location is the cytoplasm. The enzyme catalyses dUMP + (6R)-5,10-methylene-5,6,7,8-tetrahydrofolate = 7,8-dihydrofolate + dTMP. It functions in the pathway pyrimidine metabolism; dTTP biosynthesis. Its function is as follows. Catalyzes the reductive methylation of 2'-deoxyuridine-5'-monophosphate (dUMP) to 2'-deoxythymidine-5'-monophosphate (dTMP) while utilizing 5,10-methylenetetrahydrofolate (mTHF) as the methyl donor and reductant in the reaction, yielding dihydrofolate (DHF) as a by-product. This enzymatic reaction provides an intracellular de novo source of dTMP, an essential precursor for DNA biosynthesis. The sequence is that of Thymidylate synthase from Rhodopseudomonas palustris (strain HaA2).